The primary structure comprises 116 residues: Outer membrane protein assembly factor BamE (116 aa).

The first 22 residues, 1–22 (MITMRCKMLTAAAVMLAMLTAG), serve as a signal peptide directing secretion. Cys23 carries the N-palmitoyl cysteine lipid modification. Residue Cys23 is the site of S-diacylglycerol cysteine attachment.

This sequence belongs to the BamE family. As to quaternary structure, part of the Bam complex, which is composed of the outer membrane protein BamA, and four lipoproteins BamB, BamC, BamD and BamE.

The protein resides in the cell outer membrane. Its function is as follows. Part of the outer membrane protein assembly complex, which is involved in assembly and insertion of beta-barrel proteins into the outer membrane. This Yersinia pestis protein is Outer membrane protein assembly factor BamE.